The primary structure comprises 242 residues: Lactate utilization protein A 2 (242 aa).

This sequence belongs to the LutA/YkgE family.

Is involved in L-lactate degradation and allows cells to grow with lactate as the sole carbon source. The sequence is that of Lactate utilization protein A 2 from Bacillus cereus (strain Q1).